The sequence spans 416 residues: Gamma-glutamyl phosphate reductase (416 aa).

Belongs to the gamma-glutamyl phosphate reductase family.

The protein localises to the cytoplasm. It catalyses the reaction L-glutamate 5-semialdehyde + phosphate + NADP(+) = L-glutamyl 5-phosphate + NADPH + H(+). Its pathway is amino-acid biosynthesis; L-proline biosynthesis; L-glutamate 5-semialdehyde from L-glutamate: step 2/2. Its function is as follows. Catalyzes the NADPH-dependent reduction of L-glutamate 5-phosphate into L-glutamate 5-semialdehyde and phosphate. The product spontaneously undergoes cyclization to form 1-pyrroline-5-carboxylate. This is Gamma-glutamyl phosphate reductase from Leptospira interrogans serogroup Icterohaemorrhagiae serovar copenhageni (strain Fiocruz L1-130).